A 534-amino-acid chain; its full sequence is Probable alpha-galactosidase A (534 aa).

Residues 1-25 (MRLITRWIPLANALASTMPVQVVAS) form the signal peptide. Residues C47 and C79 are joined by a disulfide bond. Residues N50, N88, N94, and N124 are each glycosylated (N-linked (GlcNAc...) asparagine). An intrachain disulfide couples C127 to C157. Catalysis depends on D155, which acts as the Nucleophile. A glycan (N-linked (GlcNAc...) asparagine) is linked at N204. D213 (proton donor) is an active-site residue. One can recognise a Ricin B-type lectin domain in the interval 413-534 (CSQVIPTGLI…GLPAGVHVAL (122 aa)). A disulfide bridge links C430 with C443. N444 carries an N-linked (GlcNAc...) asparagine glycan. C468 and C481 are oxidised to a cystine.

It belongs to the glycosyl hydrolase 27 family.

The protein localises to the secreted. The catalysed reaction is Hydrolysis of terminal, non-reducing alpha-D-galactose residues in alpha-D-galactosides, including galactose oligosaccharides, galactomannans and galactolipids.. In terms of biological role, hydrolyzes a variety of simple alpha-D-galactoside as well as more complex molecules such as oligosaccharides and polysaccharides. This is Probable alpha-galactosidase A (aglA) from Aspergillus oryzae (strain ATCC 42149 / RIB 40) (Yellow koji mold).